Here is a 567-residue protein sequence, read N- to C-terminus: Adenine deaminase (567 aa).

It belongs to the metallo-dependent hydrolases superfamily. Adenine deaminase family. It depends on Mn(2+) as a cofactor.

The catalysed reaction is adenine + H2O + H(+) = hypoxanthine + NH4(+). The sequence is that of Adenine deaminase from Methanothrix thermoacetophila (strain DSM 6194 / JCM 14653 / NBRC 101360 / PT) (Methanosaeta thermophila).